A 160-amino-acid chain; its full sequence is Large ribosomal subunit protein bL17 (160 aa).

Residues Lys-128 to Glu-160 are disordered. A compositionally biased stretch (basic residues) spans Lys-129–Lys-140.

Belongs to the bacterial ribosomal protein bL17 family. In terms of assembly, part of the 50S ribosomal subunit. Contacts protein L32.

The chain is Large ribosomal subunit protein bL17 from Porphyromonas gingivalis (strain ATCC 33277 / DSM 20709 / CIP 103683 / JCM 12257 / NCTC 11834 / 2561).